A 307-amino-acid chain; its full sequence is High-affinity branched-chain amino acid transport system permease protein BraD (307 aa).

Transmembrane regions (helical) follow at residues 21-41, 45-65, 70-90, 104-124, 132-152, 154-174, 203-223, 224-244, 245-265, and 280-300; these read YALI…INFA, VYMI…MMGL, LMML…GYSI, LIPL…VMLS, IPTL…GVVI, YMQI…TLFI, IIAL…VLLG, MQYG…AFTA, AVLG…LLGV, and DVVA…GILG.

The protein belongs to the binding-protein-dependent transport system permease family. LivHM subfamily.

Its subcellular location is the cell inner membrane. Component of the high affinity leucine, isoleucine, valine, transport system (LIV-I), which is operative without Na(+) and is specific for alanine and threonine, in addition to branched-chain amino acids. This is High-affinity branched-chain amino acid transport system permease protein BraD (braD) from Pseudomonas aeruginosa (strain ATCC 15692 / DSM 22644 / CIP 104116 / JCM 14847 / LMG 12228 / 1C / PRS 101 / PAO1).